The chain runs to 188 residues: Large ribosomal subunit protein eL18 (188 aa).

Residue Lys-119 forms a Glycyl lysine isopeptide (Lys-Gly) (interchain with G-Cter in SUMO2) linkage. Ser-130 is subject to Phosphoserine. Positions 150–188 (RHFGKAPRTPHSHTKPYVRSKGRKFERARGRWASRGYKN) are disordered. Composition is skewed to basic residues over residues 151–171 (HFGK…RSKG) and 179–188 (GRWASRGYKN). Residue Thr-158 is modified to Phosphothreonine. A Glycyl lysine isopeptide (Lys-Gly) (interchain with G-Cter in SUMO2) cross-link involves residue Lys-164.

This sequence belongs to the eukaryotic ribosomal protein eL18 family. Component of the large ribosomal subunit.

The protein resides in the cytoplasm. The protein localises to the cytosol. It localises to the rough endoplasmic reticulum. Component of the large ribosomal subunit. The ribosome is a large ribonucleoprotein complex responsible for the synthesis of proteins in the cell. The chain is Large ribosomal subunit protein eL18 (RPL18) from Oryctolagus cuniculus (Rabbit).